Reading from the N-terminus, the 226-residue chain is Ribosome maturation factor RimM (226 aa).

The PRC barrel domain maps to 144-225 (ADEFYWVDLI…RIVVDWEADY (82 aa)).

The protein belongs to the RimM family. Binds ribosomal protein uS19.

The protein localises to the cytoplasm. An accessory protein needed during the final step in the assembly of 30S ribosomal subunit, possibly for assembly of the head region. Essential for efficient processing of 16S rRNA. May be needed both before and after RbfA during the maturation of 16S rRNA. It has affinity for free ribosomal 30S subunits but not for 70S ribosomes. This chain is Ribosome maturation factor RimM, found in Burkholderia ambifaria (strain ATCC BAA-244 / DSM 16087 / CCUG 44356 / LMG 19182 / AMMD) (Burkholderia cepacia (strain AMMD)).